A 184-amino-acid polypeptide reads, in one-letter code: Oligoribonuclease (184 aa).

Residues 8-171 (LIWIDLEMTG…DDIRESIAEL (164 aa)) enclose the Exonuclease domain. Y129 is an active-site residue.

This sequence belongs to the oligoribonuclease family.

The protein resides in the cytoplasm. Its function is as follows. 3'-to-5' exoribonuclease specific for small oligoribonucleotides. The sequence is that of Oligoribonuclease from Pasteurella multocida (strain Pm70).